The chain runs to 169 residues: AAQKRPSQRSKYLASASTMDHARHGFLPRHRDTGILDSLGRFFGSDRGAPKRGSGKDGHHAARTTHYGSLPQKAQGHRPQDENPVVHFFKNIVTPRTPPPSQGKGRGLSLSRFSWGAEGQKPGFGYGGRASDYKSAHKGLKGHDAQGTLSKIFKLGGRDSRSGSPMARR.

N-acetylalanine is present on A1. The segment at 1 to 114 is disordered; that stretch reads AAQKRPSQRS…GRGLSLSRFS (114 aa). Phosphoserine; in C5 and C6 is present on S7. S10 carries the phosphoserine modification. A Phosphotyrosine modification is found at Y12. S17 carries the post-translational modification Phosphoserine. A Phosphothreonine modification is found at T18. A Citrulline; in form C8b modification is found at R23. Position 29 is a citrulline (R29). Residue T33 is modified to Phosphothreonine. Position 38 is a phosphoserine (S38). At R41 the chain carries Citrulline; alternate. R41 is modified (omega-N-methylarginine; alternate). Positions 43 to 87 are induces experimental autoimmune encephalomyelitis (EAE) 1; that stretch reads FGSDRGAPKRGSGKDGHHAARTTHYGSLPQKAQGHRPQDENPVVH. R47 carries the post-translational modification Citrulline; in form C8b. R47 bears the Omega-N-methylarginine mark. Position 54 is a phosphoserine; in C4, C5 and C6 (S54). A Citrulline modification is found at R63. At T65 the chain carries Phosphothreonine. Residue Y67 is modified to Phosphotyrosine. Residue T94 is modified to Phosphothreonine. R96 is subject to Citrulline; in form C2, C3, C8a and C8b. Residue T97 is modified to Phosphothreonine; by MAPK; in C3, C4, C5 and C6. Residue Q102 is modified to Deamidated glutamine; in form C5. R106 is subject to Citrulline; alternate. R106 carries the post-translational modification Omega-N-methylarginine; alternate. Position 106 is a symmetric dimethylarginine; alternate (R106). A Citrulline modification is found at R112. Phosphoserine is present on S114. The segment at 114 to 122 is induces experimental autoimmune encephalomyelitis (EAE) 2; that stretch reads SWGAEGQKP. A Deamidated glutamine; in form C3 modification is found at Q120. K121 is modified (N6-acetyllysine). The residue at position 129 (R129) is a Citrulline. The disordered stretch occupies residues 133–169; it reads YKSAHKGLKGHDAQGTLSKIFKLGGRDSRSGSPMARR. A Deamidated glutamine; in form C2 modification is found at Q146. R158 is subject to Citrulline. The residue at position 160 (S160) is a Phosphoserine; in C4 and C6. At R161 the chain carries Citrulline; in form C3. S164 carries the post-translational modification Phosphoserine; in form C3, C5 and C6. Citrulline occurs at positions 168 and 169.

The protein belongs to the myelin basic protein family. As to quaternary structure, homodimer; self-associates in the presence of lysolipid. Post-translationally, at least 6 charge isomers; C1 (the most cationic and least modified form), C2, C3, C4, C5 and C6 (the least cationic form); are produced as a result of optional post-translational modifications, such as phosphorylation of serine or threonine residues, deamidation of glutamine or asparagine residues, citrullination and methylation of arginine residues. In terms of processing, phosphorylated by TAOK2, VRK2, MAPK11, MAPK12, MAPK14 and MINK1. Proteolytically cleaved in B cell lysosomes by cathepsin CTSG which degrades the major immunogenic MBP epitope and prevents the activation of MBP-specific autoreactive T cells. As to expression, found in both the central and the peripheral nervous system.

It localises to the myelin membrane. In terms of biological role, is, with PLP, the most abundant protein component of the myelin membrane in the CNS. Has a role in both the formation and stabilization of this compact multilayer arrangement of bilayers. Each splice variant and charge isomer may have a specialized function in the assembly of an optimized, biochemically functional myelin membrane. This is Myelin basic protein (MBP) from Bos taurus (Bovine).